A 515-amino-acid polypeptide reads, in one-letter code: ATP synthase subunit alpha (515 aa).

ATP is bound at residue 169-176 (GDRQTGKT).

It belongs to the ATPase alpha/beta chains family. As to quaternary structure, F-type ATPases have 2 components, CF(1) - the catalytic core - and CF(0) - the membrane proton channel. CF(1) has five subunits: alpha(3), beta(3), gamma(1), delta(1), epsilon(1). CF(0) has three main subunits: a(1), b(2) and c(9-12). The alpha and beta chains form an alternating ring which encloses part of the gamma chain. CF(1) is attached to CF(0) by a central stalk formed by the gamma and epsilon chains, while a peripheral stalk is formed by the delta and b chains.

The protein resides in the cell inner membrane. It carries out the reaction ATP + H2O + 4 H(+)(in) = ADP + phosphate + 5 H(+)(out). Functionally, produces ATP from ADP in the presence of a proton gradient across the membrane. The alpha chain is a regulatory subunit. The sequence is that of ATP synthase subunit alpha from Myxococcus xanthus.